Reading from the N-terminus, the 171-residue chain is Shikimate kinase (171 aa).

ATP is bound at residue 14 to 19; sequence GAGKST. S18 lines the Mg(2+) pocket. Positions 36, 60, and 82 each coordinate substrate. Residue R120 participates in ATP binding. Position 139 (R139) interacts with substrate. Q156 is an ATP binding site.

This sequence belongs to the shikimate kinase family. In terms of assembly, monomer. Requires Mg(2+) as cofactor.

It is found in the cytoplasm. It carries out the reaction shikimate + ATP = 3-phosphoshikimate + ADP + H(+). It participates in metabolic intermediate biosynthesis; chorismate biosynthesis; chorismate from D-erythrose 4-phosphate and phosphoenolpyruvate: step 5/7. Catalyzes the specific phosphorylation of the 3-hydroxyl group of shikimic acid using ATP as a cosubstrate. This is Shikimate kinase from Shewanella woodyi (strain ATCC 51908 / MS32).